The primary structure comprises 216 residues: Cytochrome c biogenesis ATP-binding export protein CcmA (216 aa).

An ABC transporter domain is found at 11 to 216 (VSASKLTCIR…RKIRLDYRFV (206 aa)). Residue 43 to 50 (GPNGAGKT) participates in ATP binding.

The protein belongs to the ABC transporter superfamily. CcmA exporter (TC 3.A.1.107) family. The complex is composed of two ATP-binding proteins (CcmA) and two transmembrane proteins (CcmB).

It is found in the cell inner membrane. The enzyme catalyses heme b(in) + ATP + H2O = heme b(out) + ADP + phosphate + H(+). In terms of biological role, part of the ABC transporter complex CcmAB involved in the biogenesis of c-type cytochromes; once thought to export heme, this seems not to be the case, but its exact role is uncertain. Responsible for energy coupling to the transport system. This chain is Cytochrome c biogenesis ATP-binding export protein CcmA, found in Shewanella sp. (strain MR-7).